The following is a 90-amino-acid chain: Putative cytochrome c oxidase subunit 5b-like (90 aa).

Residues cysteine 43, cysteine 67, and cysteine 70 each coordinate Zn(2+).

The protein belongs to the cytochrome c oxidase subunit 5B (TC 3.D.4.11) family.

This is Putative cytochrome c oxidase subunit 5b-like from Arabidopsis thaliana (Mouse-ear cress).